The following is a 239-amino-acid chain: ATP-dependent dethiobiotin synthetase BioD (239 aa).

Position 15–20 (15–20 (EIGKTF)) interacts with ATP. Threonine 19 contacts Mg(2+). Lysine 40 is a catalytic residue. ATP is bound by residues aspartate 57, 118-121 (EGVG), and 178-179 (NH). Positions 57 and 118 each coordinate Mg(2+).

Belongs to the dethiobiotin synthetase family. As to quaternary structure, homodimer. Requires Mg(2+) as cofactor.

Its subcellular location is the cytoplasm. The enzyme catalyses (7R,8S)-7,8-diammoniononanoate + CO2 + ATP = (4R,5S)-dethiobiotin + ADP + phosphate + 3 H(+). The protein operates within cofactor biosynthesis; biotin biosynthesis; biotin from 7,8-diaminononanoate: step 1/2. In terms of biological role, catalyzes a mechanistically unusual reaction, the ATP-dependent insertion of CO2 between the N7 and N8 nitrogen atoms of 7,8-diaminopelargonic acid (DAPA, also called 7,8-diammoniononanoate) to form a ureido ring. In Burkholderia ambifaria (strain ATCC BAA-244 / DSM 16087 / CCUG 44356 / LMG 19182 / AMMD) (Burkholderia cepacia (strain AMMD)), this protein is ATP-dependent dethiobiotin synthetase BioD.